Here is a 243-residue protein sequence, read N- to C-terminus: PHO85 cyclin-like protein psl1 (243 aa).

Residues 211–224 (ESPISHTPQQNQQD) show a composition bias toward polar residues. Residues 211-231 (ESPISHTPQQNQQDEQPRRPI) are disordered.

This sequence belongs to the cyclin family. PHO80 subfamily. Forms a cyclin-CDK complex with pef1.

It localises to the cytoplasm. It is found in the nucleus. Its function is as follows. Cyclin partner of the cyclin-dependent kinase (CDK) pef1 (PHO85 homolog). This Schizosaccharomyces pombe (strain 972 / ATCC 24843) (Fission yeast) protein is PHO85 cyclin-like protein psl1 (psl1).